A 1372-amino-acid polypeptide reads, in one-letter code: Serine protease pic autotransporter (1372 aa).

Residues 1–55 form the signal peptide; it reads MNKVYSLKYCPVTGGLIAVSELARRVIKKTCRRLTHILLAGIPAICLCYSQISQA. The Peptidase S6 domain occupies 56 to 301; that stretch reads GIVRSDIAYQ…NVIPTDYLNQ (246 aa). Active-site charge relay system residues include H127, D155, and S258. The region spanning 1106-1372 is the Autotransporter domain; sequence DTNGDAGAWA…AVNANFRYMF (267 aa).

Cleaved to release the mature protein from the outer membrane.

It is found in the periplasm. The protein resides in the secreted. Its subcellular location is the cell surface. The protein localises to the cell outer membrane. Its function is as follows. Involved in intestinal colonization, displays in vitro mucinolytic activity, serum resistance, and hemagglutination. Important to penetrate the intestinal mucus layer. This chain is Serine protease pic autotransporter (pic), found in Shigella flexneri.